The chain runs to 483 residues: Argininosuccinate lyase (483 aa).

It belongs to the lyase 1 family. Argininosuccinate lyase subfamily.

It is found in the cytoplasm. The enzyme catalyses 2-(N(omega)-L-arginino)succinate = fumarate + L-arginine. The protein operates within amino-acid biosynthesis; L-arginine biosynthesis; L-arginine from L-ornithine and carbamoyl phosphate: step 3/3. This chain is Argininosuccinate lyase, found in Albidiferax ferrireducens (strain ATCC BAA-621 / DSM 15236 / T118) (Rhodoferax ferrireducens).